We begin with the raw amino-acid sequence, 193 residues long: Probable 3' cyclic ADP-D-ribose synthase ThsB' (193 aa).

As to quaternary structure, homodimer.

It catalyses the reaction NAD(+) = 3'cADPR + nicotinamide + H(+). TIR-like domain-containing component of the Thoeris antiviral defense system, composed of ThsA and ThsB and ThsB'. In the presence of NAD(+) produces a signaling molecule that activates cognate ThsA (AC J8G6Z1) to hydrolyze NAD(+). The signaling molecule is a cyclic ADP-D-ribose isomer and may be 3' cyclic ADP-D-ribose (3'cADPR); it is not 2'cADPR. The protein is Probable 3' cyclic ADP-D-ribose synthase ThsB' of Bacillus cereus (strain MSX-D12).